Consider the following 293-residue polypeptide: Bifunctional protein FolD (293 aa).

NADP(+) contacts are provided by residues 165–167 (GRS), Ser-190, and Ile-231.

It belongs to the tetrahydrofolate dehydrogenase/cyclohydrolase family. Homodimer.

It carries out the reaction (6R)-5,10-methylene-5,6,7,8-tetrahydrofolate + NADP(+) = (6R)-5,10-methenyltetrahydrofolate + NADPH. The enzyme catalyses (6R)-5,10-methenyltetrahydrofolate + H2O = (6R)-10-formyltetrahydrofolate + H(+). The protein operates within one-carbon metabolism; tetrahydrofolate interconversion. Functionally, catalyzes the oxidation of 5,10-methylenetetrahydrofolate to 5,10-methenyltetrahydrofolate and then the hydrolysis of 5,10-methenyltetrahydrofolate to 10-formyltetrahydrofolate. This Synechococcus sp. (strain CC9311) protein is Bifunctional protein FolD.